Here is a 73-residue protein sequence, read N- to C-terminus: ATP synthase subunit 9, mitochondrial (73 aa).

2 consecutive transmembrane segments (helical) span residues 12 to 32 (VAALGLIGAGIGVGIVFAALI) and 50 to 70 (ILGFALSEATGLFALMVSFLL).

The protein belongs to the ATPase C chain family. In terms of assembly, F-type ATPases have 2 components, CF(1) - the catalytic core - and CF(0) - the membrane proton channel. CF(1) has five subunits: alpha(3), beta(3), gamma(1), delta(1), epsilon(1). CF(0) has three main subunits: a, b and c.

It is found in the mitochondrion inner membrane. Functionally, mitochondrial membrane ATP synthase (F(1)F(0) ATP synthase or Complex V) produces ATP from ADP in the presence of a proton gradient across the membrane which is generated by electron transport complexes of the respiratory chain. F-type ATPases consist of two structural domains, F(1) - containing the extramembraneous catalytic core and F(0) - containing the membrane proton channel, linked together by a central stalk and a peripheral stalk. During catalysis, ATP synthesis in the catalytic domain of F(1) is coupled via a rotary mechanism of the central stalk subunits to proton translocation. Part of the complex F(0) domain. A homomeric c-ring of probably 10 subunits is part of the complex rotary element. The sequence is that of ATP synthase subunit 9, mitochondrial (ATP9) from Mycosarcoma maydis (Corn smut fungus).